A 202-amino-acid polypeptide reads, in one-letter code: MSDDSSSPLTTLKILIIGESGVGKSSLMLRFVDDVFDPEQAATIGVDFRVTSMTIDGNRVKLAIWDTAGQERFRTLTPSYYRGAQGVICVYDVTSRSSFEKLKHWMTEVDTYCTNDNVIKMMVANKIDMPNRTVTREEGLKFAKRHRTLFIEASAKTKEGVQCTFEELIEKIIQTPDLWDNDRPTFRLGQPTDTSSGNLCGC.

GTP-binding residues include serine 20, glycine 23, lysine 24, serine 25, serine 26, aspartate 37, proline 38, threonine 43, glycine 69, lysine 126, aspartate 128, and alanine 155. The Effector region signature appears at 40–48 (QAATIGVDF). The interval 183-202 (RPTFRLGQPTDTSSGNLCGC) is disordered. Positions 191-202 (PTDTSSGNLCGC) are enriched in polar residues. S-geranylgeranyl cysteine attachment occurs at residues cysteine 200 and cysteine 202. Cysteine 202 carries the post-translational modification Cysteine methyl ester.

This sequence belongs to the small GTPase superfamily. Rab family.

The catalysed reaction is GTP + H2O = GDP + phosphate + H(+). In terms of biological role, the small GTPases Rab are key regulators of intracellular membrane trafficking, from the formation of transport vesicles to their fusion with membranes. Rabs cycle between an inactive GDP-bound form and an active GTP-bound form that is able to recruit to membranes different sets of downstream effectors directly responsible for vesicle formation, movement, tethering and fusion. Plays a role in apical endocytosis/recycling. May be implicated in transport between the plasma membrane and early endosomes. This chain is Ras-related protein Rab-18 (rab-18), found in Caenorhabditis briggsae.